A 176-amino-acid chain; its full sequence is Small ribosomal subunit protein uS4 (176 aa).

The S4 RNA-binding domain maps to 103-165; that stretch reads RRLQTIVYKK…PTSPYAKRRL (63 aa).

It belongs to the universal ribosomal protein uS4 family. Part of the 30S ribosomal subunit. Contacts protein S5. The interaction surface between S4 and S5 is involved in control of translational fidelity.

Functionally, one of the primary rRNA binding proteins, it binds directly to 16S rRNA where it nucleates assembly of the body of the 30S subunit. In terms of biological role, with S5 and S12 plays an important role in translational accuracy. The polypeptide is Small ribosomal subunit protein uS4 (Hyperthermus butylicus (strain DSM 5456 / JCM 9403 / PLM1-5)).